The chain runs to 337 residues: MDLDQIVADAQKAFAEASDVTTLENEKARFLGKSGALTELLKGLGKLDPETRKSEGARINLVKQQVEAALTARRQALADVLLNQRLAAEAIDVTLPGRGTGAGSLHPVMRTWERVEQIFRTIGFDVADGPEIETDWYNFTSLNSPENHPARSMQDTFYVDGKDADGRQLLLRTHTSPMQVRYARTNTPPIKVIVPGRTYRVDSDATHSPMFNQVEGLWIDENISFADLKGVYTDFLKKFFERDDILVRFRPSYFPFTEPSAEIDMLFETGKNAGKWLEISGSGQVHPTVIRNMGLDPDRYIGFAFGSGLERLTMLRYGVQDLRLFFENDLRFLRQFA.

E258 is a Mg(2+) binding site.

This sequence belongs to the class-II aminoacyl-tRNA synthetase family. Phe-tRNA synthetase alpha subunit type 1 subfamily. In terms of assembly, tetramer of two alpha and two beta subunits. Requires Mg(2+) as cofactor.

It is found in the cytoplasm. The enzyme catalyses tRNA(Phe) + L-phenylalanine + ATP = L-phenylalanyl-tRNA(Phe) + AMP + diphosphate + H(+). The protein is Phenylalanine--tRNA ligase alpha subunit of Paraburkholderia phytofirmans (strain DSM 17436 / LMG 22146 / PsJN) (Burkholderia phytofirmans).